Reading from the N-terminus, the 66-residue chain is Cytochrome c oxidase polypeptide VIII, mitochondrial (66 aa).

A mitochondrion-targeting transit peptide spans 1–17 (MLRYSLQARSALRGVRF). At 18-38 (SSSHSAPKPGSTIPFYINKKP) the chain is on the mitochondrial matrix side. Residues 39–59 (LPTLLYFGTFGVIFSIPFIVV) traverse the membrane as a helical segment. Over 60–66 (KYHNRNL) the chain is Mitochondrial intermembrane.

This sequence belongs to the cytochrome c oxidase VIIc family. As to quaternary structure, component of the cytochrome c oxidase (complex IV, CIV), a multisubunit enzyme composed of a catalytic core of 3 subunits and several supernumerary subunits. The complex exists as a monomer or a dimer and forms supercomplexes (SCs) in the inner mitochondrial membrane with ubiquinol-cytochrome c oxidoreductase (cytochrome b-c1 complex, complex III, CIII).

The protein resides in the mitochondrion inner membrane. It participates in energy metabolism; oxidative phosphorylation. In terms of biological role, component of the cytochrome c oxidase, the last enzyme in the mitochondrial electron transport chain which drives oxidative phosphorylation. The respiratory chain contains 3 multisubunit complexes succinate dehydrogenase (complex II, CII), ubiquinol-cytochrome c oxidoreductase (cytochrome b-c1 complex, complex III, CIII) and cytochrome c oxidase (complex IV, CIV), that cooperate to transfer electrons derived from NADH and succinate to molecular oxygen, creating an electrochemical gradient over the inner membrane that drives transmembrane transport and the ATP synthase. Cytochrome c oxidase is the component of the respiratory chain that catalyzes the reduction of oxygen to water. Electrons originating from reduced cytochrome c in the intermembrane space (IMS) are transferred via the dinuclear copper A center (CU(A)) of subunit 2 and heme A of subunit 1 to the active site in subunit 1, a binuclear center (BNC) formed by heme A3 and copper B (CU(B)). The BNC reduces molecular oxygen to 2 water molecules using 4 electrons from cytochrome c in the IMS and 4 protons from the mitochondrial matrix. This Schizosaccharomyces pombe (strain 972 / ATCC 24843) (Fission yeast) protein is Cytochrome c oxidase polypeptide VIII, mitochondrial (cox8).